The sequence spans 297 residues: N-acetylmuramoyl-L-alanine amidase XlyA (297 aa).

An N-terminal signal peptide occupies residues 1–44; sequence MVNIIQDFIPVGANNRPGYAMTPLYITVHNTANTAVGADAAAHA. An N-acetylmuramoyl-L-alanine amidase domain is found at 45 to 140; that stretch reads RYLKNPDTTT…KYWSGKECPR (96 aa). The LysM domain maps to 159–203; the sequence is QTYVVKQGDTLTSIARAFGVTVAQLQEWNNIEDPNLIRVGQVLIV.

Belongs to the N-acetylmuramoyl-L-alanine amidase 2 family.

It is found in the secreted. It carries out the reaction Hydrolyzes the link between N-acetylmuramoyl residues and L-amino acid residues in certain cell-wall glycopeptides.. Functionally, autolysins are involved in some important biological processes such as cell separation, cell-wall turnover, competence for genetic transformation, formation of the flagella and sporulation. This is N-acetylmuramoyl-L-alanine amidase XlyA (xlyA) from Bacillus subtilis (strain 168).